A 712-amino-acid polypeptide reads, in one-letter code: DNA topoisomerase 3 (712 aa).

Positions 2–135 (KSLIIAEKPS…TKRLWISSVT (134 aa)) constitute a Toprim domain. Positions 8 and 104 each coordinate Mg(2+). The Topo IA-type catalytic domain occupies 152 to 581 (FNNLYHAALA…EMKAFTNQVV (430 aa)). An interaction with DNA region spans residues 186–191 (SLGRVQ). Y305 acts as the O-(5'-phospho-DNA)-tyrosine intermediate in catalysis.

This sequence belongs to the type IA topoisomerase family. Requires Mg(2+) as cofactor.

It carries out the reaction ATP-independent breakage of single-stranded DNA, followed by passage and rejoining.. Its function is as follows. Releases the supercoiling and torsional tension of DNA, which is introduced during the DNA replication and transcription, by transiently cleaving and rejoining one strand of the DNA duplex. Introduces a single-strand break via transesterification at a target site in duplex DNA. The scissile phosphodiester is attacked by the catalytic tyrosine of the enzyme, resulting in the formation of a DNA-(5'-phosphotyrosyl)-enzyme intermediate and the expulsion of a 3'-OH DNA strand. The free DNA strand then undergoes passage around the unbroken strand, thus removing DNA supercoils. Finally, in the religation step, the DNA 3'-OH attacks the covalent intermediate to expel the active-site tyrosine and restore the DNA phosphodiester backbone. The chain is DNA topoisomerase 3 from Staphylococcus saprophyticus subsp. saprophyticus (strain ATCC 15305 / DSM 20229 / NCIMB 8711 / NCTC 7292 / S-41).